The chain runs to 84 residues: Putative membrane protein insertion efficiency factor (84 aa).

The protein belongs to the UPF0161 family.

The protein localises to the cell inner membrane. Functionally, could be involved in insertion of integral membrane proteins into the membrane. The polypeptide is Putative membrane protein insertion efficiency factor (Shewanella pealeana (strain ATCC 700345 / ANG-SQ1)).